Reading from the N-terminus, the 290-residue chain is Inositol monophosphatase 2 (290 aa).

Residues Glu83, Asp103, Ile105, and Asp106 each coordinate Mg(2+). Glu83 contributes to the substrate binding site. Residues 105 to 108, 207 to 209, Gln226, and Asp233 contribute to the substrate site; these read IDGT and GSS. Mg(2+) is bound at residue Asp233.

This sequence belongs to the inositol monophosphatase superfamily. As to quaternary structure, homodimer. It depends on Mg(2+) as a cofactor. Mostly expressed in brain, small intestine, heart, kidney, and spleen (at protein level).

The protein resides in the cytoplasm. The catalysed reaction is a myo-inositol phosphate + H2O = myo-inositol + phosphate. It carries out the reaction 1D-myo-inositol 1-phosphate + H2O = myo-inositol + phosphate. The enzyme catalyses 1D-myo-inositol 2-phosphate + H2O = myo-inositol + phosphate. It catalyses the reaction 1D-myo-inositol 3-phosphate + H2O = myo-inositol + phosphate. The catalysed reaction is 1D-myo-inositol 4-phosphate + H2O = myo-inositol + phosphate. It carries out the reaction 1D-myo-inositol 5-phosphate + H2O = myo-inositol + phosphate. The enzyme catalyses 1D-myo-inositol 6-phosphate + H2O = myo-inositol + phosphate. It catalyses the reaction alpha-D-glucose 1-phosphate + H2O = D-glucose + phosphate. The catalysed reaction is glycerol 2-phosphate + H2O = glycerol + phosphate. It carries out the reaction adenosine 2'-phosphate + H2O = adenosine + phosphate. Its pathway is polyol metabolism; myo-inositol biosynthesis; myo-inositol from D-glucose 6-phosphate: step 2/2. Its function is as follows. Phosphatase that can use myo-inositol monophosphates, myo-inositol 1,4-diphosphate, scyllo-inositol-1,4-diphosphate, glucose-1-phosphate, beta-glycerophosphate and 2'-AMP as substrates in vitro. No physiological substrates has been described yet. Has been implicated as the pharmacological target for lithium Li(+) action in brain. The protein is Inositol monophosphatase 2 of Mus musculus (Mouse).